The sequence spans 142 residues: Large ribosomal subunit protein uL16 (142 aa).

The protein belongs to the universal ribosomal protein uL16 family. As to quaternary structure, part of the 50S ribosomal subunit.

Binds 23S rRNA and is also seen to make contacts with the A and possibly P site tRNAs. The polypeptide is Large ribosomal subunit protein uL16 (Trichormus variabilis (strain ATCC 29413 / PCC 7937) (Anabaena variabilis)).